The chain runs to 99 residues: Large ribosomal subunit protein uL23 (99 aa).

The protein belongs to the universal ribosomal protein uL23 family. In terms of assembly, part of the 50S ribosomal subunit. Contacts protein L29, and trigger factor when it is bound to the ribosome.

Functionally, one of the early assembly proteins it binds 23S rRNA. One of the proteins that surrounds the polypeptide exit tunnel on the outside of the ribosome. Forms the main docking site for trigger factor binding to the ribosome. The chain is Large ribosomal subunit protein uL23 from Shewanella woodyi (strain ATCC 51908 / MS32).